We begin with the raw amino-acid sequence, 101 residues long: NAD(P)H-quinone oxidoreductase subunit 4L, chloroplastic (101 aa).

3 helical membrane-spanning segments follow: residues 2–22, 30–52, and 61–81; these read ILEH…YGLI, ALMC…SDFF, and IFSI…LAIV.

This sequence belongs to the complex I subunit 4L family. In terms of assembly, NDH is composed of at least 16 different subunits, 5 of which are encoded in the nucleus.

The protein localises to the plastid. The protein resides in the chloroplast thylakoid membrane. It catalyses the reaction a plastoquinone + NADH + (n+1) H(+)(in) = a plastoquinol + NAD(+) + n H(+)(out). It carries out the reaction a plastoquinone + NADPH + (n+1) H(+)(in) = a plastoquinol + NADP(+) + n H(+)(out). In terms of biological role, NDH shuttles electrons from NAD(P)H:plastoquinone, via FMN and iron-sulfur (Fe-S) centers, to quinones in the photosynthetic chain and possibly in a chloroplast respiratory chain. The immediate electron acceptor for the enzyme in this species is believed to be plastoquinone. Couples the redox reaction to proton translocation, and thus conserves the redox energy in a proton gradient. The protein is NAD(P)H-quinone oxidoreductase subunit 4L, chloroplastic of Oenothera glazioviana (Large-flowered evening primrose).